Reading from the N-terminus, the 409-residue chain is Inactive serine protease 35 (409 aa).

A signal peptide spans 1–17 (MLLWLIFFTPGWTLIDG). N87 and N107 each carry an N-linked (GlcNAc...) asparagine glycan. One can recognise a Peptidase S1 domain in the interval 120–404 (VYGTDSRFSI…ICLWIHGNDA (285 aa)). C150 and C166 are disulfide-bonded. Positions 188–203 (RNKSGGKKRRGSKRSR) are enriched in basic residues. Residues 188–246 (RNKSGGKKRRGSKRSRRETSGGDQREGPREHLQDRVKAGRRRKQSGGGQRVSEGRPSFR) are disordered. Over residues 204-224 (RETSGGDQREGPREHLQDRVK) the composition is skewed to basic and acidic residues.

Belongs to the peptidase S1 family.

It is found in the secreted. The chain is Inactive serine protease 35 (PRSS35) from Macaca mulatta (Rhesus macaque).